The following is a 64-amino-acid chain: OPG024 protein (64 aa).

Residues 1–64 (MSSKGGSSGG…GGVKSGTGKI (64 aa)) are disordered. Residues 23-34 (NKGSKTYTSSGS) show a composition bias toward low complexity. The span at 49-64 (VNGGVNGGVKSGTGKI) shows a compositional bias: gly residues.

Belongs to the orthopoxvirus OPG024 family.

The sequence is that of OPG024 protein (OPG023) from Cynomys gunnisoni (Gunnison's prairie dog).